The primary structure comprises 417 residues: NADH-quinone oxidoreductase subunit D (417 aa).

The protein belongs to the complex I 49 kDa subunit family. In terms of assembly, NDH-1 is composed of 14 different subunits. Subunits NuoB, C, D, E, F, and G constitute the peripheral sector of the complex.

Its subcellular location is the cell inner membrane. The enzyme catalyses a quinone + NADH + 5 H(+)(in) = a quinol + NAD(+) + 4 H(+)(out). Its function is as follows. NDH-1 shuttles electrons from NADH, via FMN and iron-sulfur (Fe-S) centers, to quinones in the respiratory chain. The immediate electron acceptor for the enzyme in this species is believed to be ubiquinone. Couples the redox reaction to proton translocation (for every two electrons transferred, four hydrogen ions are translocated across the cytoplasmic membrane), and thus conserves the redox energy in a proton gradient. In Legionella pneumophila subsp. pneumophila (strain Philadelphia 1 / ATCC 33152 / DSM 7513), this protein is NADH-quinone oxidoreductase subunit D.